A 790-amino-acid chain; its full sequence is Protein SEY1 (790 aa).

Over 1-692 (MELSEGELSH…KRSIVQHITQ (692 aa)) the chain is Cytoplasmic. The region spanning 55–284 (GNNYHIISVF…VNNELFKPEY (230 aa)) is the GB1/RHD3-type G domain. A GTP-binding site is contributed by 65–72 (GSQSTGKS). The helical transmembrane segment at 693–713 (IPYYIYLIILVLGWNEFMAII) threads the bilayer. Residues 714–716 (RNP) are Lumenal-facing. Residues 717-737 (LFFSLSIVLGATVYVLYYLNL) form a helical membrane-spanning segment. The Cytoplasmic portion of the chain corresponds to 738-790 (LKPAMLVAQRTMDEVIIMAKTKLREVLIDDHEVTGRQLNKIAGGKENIELDDM).

The protein belongs to the TRAFAC class dynamin-like GTPase superfamily. GB1/RHD3 GTPase family. RHD3 subfamily.

It is found in the endoplasmic reticulum membrane. Cooperates with the reticulon proteins and tubule-shaping DP1 family proteins to generate and maintain the structure of the tubular endoplasmic reticulum network. Has GTPase activity, which is required for its function in ER organization. This chain is Protein SEY1, found in Candida dubliniensis (strain CD36 / ATCC MYA-646 / CBS 7987 / NCPF 3949 / NRRL Y-17841) (Yeast).